Reading from the N-terminus, the 412-residue chain is Keratin, type I microfibrillar 48 kDa, component 8C-1 (412 aa).

An N-acetylserine modification is found at Ser1. The segment at 1–55 (SFNFCLPNLSFRSSCSSRPCVPSSCCGTTLPGACNIPANVGSCNWFCEGSFDGNE) is head. In terms of domain architecture, IF rod spans 55–366 (EKETMQFLND…GLLDSEDCKL (312 aa)). Positions 56–90 (KETMQFLNDRLASYLEKVRQLERENAELESRILER) are coil 1A. Positions 91 to 101 (SQQQEPLVCPN) are linker 1. Residues 102-202 (YQSYFRTIEE…HEEEVNTLRS (101 aa)) are coil 1B. Positions 203 to 218 (QLGDRLNVEVDAAPTV) are linker 12. The tract at residues 219–362 (DLNRVLNETR…NTYRGLLDSE (144 aa)) is coil 2. A tail region spans residues 363–412 (DCKLPCNPCATTNACGKTITPCISSPCAPAAPCTPCVPRSRCGPCNSYVR).

The protein belongs to the intermediate filament family.

Functionally, wool microfibrillar keratin. In Ovis aries (Sheep), this protein is Keratin, type I microfibrillar 48 kDa, component 8C-1.